Reading from the N-terminus, the 221-residue chain is CDP-diacylglycerol--glycerol-3-phosphate 3-phosphatidyltransferase (221 aa).

The next 5 helical transmembrane spans lie at 8–28 (ILTVLRLLAAPGVAVMFLYFH), 34–54 (WFALTLFILAAVTDFFDGYLA), 75–95 (MVVIALVIITGYSGMNPWLIL), 133–153 (AQMVAIAILFLGTGLEHLEGI), and 187–207 (ATWLGLALIWIAAALTFITGW).

This sequence belongs to the CDP-alcohol phosphatidyltransferase class-I family.

It is found in the cell membrane. It carries out the reaction a CDP-1,2-diacyl-sn-glycerol + sn-glycerol 3-phosphate = a 1,2-diacyl-sn-glycero-3-phospho-(1'-sn-glycero-3'-phosphate) + CMP + H(+). Its pathway is phospholipid metabolism; phosphatidylglycerol biosynthesis; phosphatidylglycerol from CDP-diacylglycerol: step 1/2. This protein catalyzes the committed step to the synthesis of the acidic phospholipids. This Cereibacter sphaeroides (strain ATCC 17023 / DSM 158 / JCM 6121 / CCUG 31486 / LMG 2827 / NBRC 12203 / NCIMB 8253 / ATH 2.4.1.) (Rhodobacter sphaeroides) protein is CDP-diacylglycerol--glycerol-3-phosphate 3-phosphatidyltransferase (pgsA).